The sequence spans 729 residues: FYN-binding protein 2 (729 aa).

Disordered stretches follow at residues 18–130 (KFNA…EEKG), 170–320 (EGQK…SAEL), 371–408 (ELSP…PPKV), and 469–490 (VTKE…KTYD). Polar residues-rich tracts occupy residues 69 to 81 (GVSQ…TLKS), 89 to 99 (KTSSSSGTPEK), 190 to 216 (GAQT…SSVS), and 226 to 240 (KSPA…SQCQ). Positions 275-284 (GPPPPKPSKP) are enriched in pro residues. Residues 374 to 402 (PRPKEEENTMEEKESWESEPLEPRKELHP) show a composition bias toward basic and acidic residues. Positions 473-485 (TPSPSTIRSSSSS) are enriched in low complexity. Tyrosine 489 is modified (phosphotyrosine). The SH2-binding; to LCP2 signature appears at 520-523 (YEDI). Residues 576–603 (DLGPRSQDDSQDGIIYDDVDTREKESND) are disordered. Residues 584 to 593 (DSQDGIIYDD) show a composition bias toward acidic residues. Tyrosine 591 carries the post-translational modification Phosphotyrosine. Positions 594–603 (VDTREKESND) are enriched in basic and acidic residues. The SH3 domain occupies 668–728 (LVINRAVACA…LVEHLDFKHQ (61 aa)).

As to quaternary structure, interacts with SKAP1, LCK and FYN. The phosphorylated form interacts with LCP2. Post-translationally, phosphorylation is required for its function in T-cell activation.

The protein resides in the membrane raft. Adapter protein that plays a role in T-cell receptor (TCR)-mediated activation of signaling pathways. Required for T-cell activation and integrin-mediated T-cell adhesion in response to TCR stimulation. The sequence is that of FYN-binding protein 2 from Mus musculus (Mouse).